Reading from the N-terminus, the 229-residue chain is Cytochrome c oxidase assembly factor 7 (229 aa).

Sel1-like repeat units lie at residues 34–66 (PEGCHRLADYLEGVKKNYESTAQVLQHNCEVNA), 68–104 (AQSCYKLGAYHVTGKGGMKKCLKTAYSCFLKSCNTQG), 108–145 (VDACHNVGLLAQDGRALETGPDTTVARQYFEKACEGGF), 146–182 (APSCFNLSTLYIQGFPGLDKSMPLALKYALKACDLGH), and 183–218 (VWGCANASRMYKLGDGTDKDEQRAEELKNRAKDLHG). Residues 197-229 (DGTDKDEQRAEELKNRAKDLHGQEKERQLKFGE) are disordered.

Belongs to the hcp beta-lactamase family.

The protein resides in the mitochondrion intermembrane space. May be required for assembly of mitochondrial respiratory chain complexes. In Danio rerio (Zebrafish), this protein is Cytochrome c oxidase assembly factor 7 (coa7).